A 616-amino-acid chain; its full sequence is Probable Xaa-Pro aminopeptidase P (616 aa).

The Mn(2+) site is built by Asp413, Asp424, Glu522, and Glu536.

Belongs to the peptidase M24B family. The cofactor is Mn(2+).

It catalyses the reaction Release of any N-terminal amino acid, including proline, that is linked to proline, even from a dipeptide or tripeptide.. Catalyzes the removal of a penultimate prolyl residue from the N-termini of peptides. The sequence is that of Probable Xaa-Pro aminopeptidase P (AMPP) from Paracoccidioides brasiliensis (strain Pb03).